The following is a 228-amino-acid chain: Probable methylthioribulose-1-phosphate dehydratase (228 aa).

Residue cysteine 87 participates in substrate binding. Zn(2+)-binding residues include histidine 105 and histidine 107. The active-site Proton donor/acceptor is glutamate 129. Position 185 (histidine 185) interacts with Zn(2+).

Belongs to the aldolase class II family. MtnB subfamily. The cofactor is Zn(2+).

The protein resides in the cytoplasm. It catalyses the reaction 5-(methylsulfanyl)-D-ribulose 1-phosphate = 5-methylsulfanyl-2,3-dioxopentyl phosphate + H2O. It participates in amino-acid biosynthesis; L-methionine biosynthesis via salvage pathway; L-methionine from S-methyl-5-thio-alpha-D-ribose 1-phosphate: step 2/6. In terms of biological role, catalyzes the dehydration of methylthioribulose-1-phosphate (MTRu-1-P) into 2,3-diketo-5-methylthiopentyl-1-phosphate (DK-MTP-1-P). The chain is Probable methylthioribulose-1-phosphate dehydratase from Drosophila willistoni (Fruit fly).